We begin with the raw amino-acid sequence, 867 residues long: Nuclear body protein SP140 (867 aa).

The HSR domain occupies 22–138 (VAEIQNVEGQ…IYRSFQNVCY (117 aa)). Disordered regions lie at residues 260-341 (TYST…EEPQ), 365-432 (TPQV…SEEL), and 486-580 (IANN…KHKD). The segment covering 268-301 (KQGEEEGRNSPRKRNQDKEKYQESPEGRDKETFD) has biased composition (basic and acidic residues). Acidic residues-rich tracts occupy residues 323 to 341 (EGEEGSDDCSEMCDGEEPQ) and 384 to 397 (EGEEGSDDCSEMCD). Residues 404-416 (ASSSLARRGSVSS) are compositionally biased toward low complexity. Basic residues-rich tracts occupy residues 494–512 (KPKRKRRKKRGHGWSRMRM) and 567–577 (QKRVRSRASRK). The short motif at 495–514 (PKRKRRKKRGHGWSRMRMRR) is the Nuclear localization signal element. In terms of domain architecture, SAND spans 580–661 (DETVDFKAPL…RWLMENGFLP (82 aa)). The PHD-type zinc finger occupies 690 to 736 (LDECEVCRDGGELFCCDTCSRVFHEDCHIPPVEAERTPWNCIFCRMK). Thr-726 bears the Phosphothreonine mark. The Bromo domain occupies 754–857 (QMCPEEQLKC…AEFEKNFKEV (104 aa)).

Interacts with PIN1. In terms of processing, phosphorylation at Thr-726 promotes binding of PIN1 and subsequent isomerization of Pro-727. As to expression, high levels in spleen and peripheral blood leukocytes, much lower levels in tonsils, thymus, prostate, ovary, small intestine, and colon. Very low levels in heart, brain, placenta, lung, liver, skeletal muscle, kidney, and pancreas. Not detected in brain, liver and muscle.

Its subcellular location is the nucleus. The protein resides in the PML body. It is found in the cytoplasm. Component of the nuclear body, also known as nuclear domain 10, PML oncogenic domain, and KR body. May be involved in the pathogenesis of acute promyelocytic leukemia and viral infection. May play a role in chromatin-mediated regulation of gene expression although it does not bind to histone H3 tails. This chain is Nuclear body protein SP140, found in Homo sapiens (Human).